The following is a 130-amino-acid chain: Small ribosomal subunit protein uS9 (130 aa).

Basic and acidic residues predominate over residues 105 to 115 (TRDSRQVERKK). Residues 105–130 (TRDSRQVERKKVGFRKSRKRTQFSKR) form a disordered region. Positions 116–130 (VGFRKSRKRTQFSKR) are enriched in basic residues.

It belongs to the universal ribosomal protein uS9 family.

The chain is Small ribosomal subunit protein uS9 from Buchnera aphidicola subsp. Schizaphis graminum (strain Sg).